The chain runs to 108 residues: Insulin (108 aa).

An N-terminal signal peptide occupies residues 1–24; it reads MALWTRLLPLLALLALWAPAPAQA. Intrachain disulfides connect cysteine 31-cysteine 94, cysteine 43-cysteine 107, and cysteine 93-cysteine 98. The propeptide at 57-85 is c peptide; that stretch reads EAENPQAGAVELGGGLGGLQALALEGPPQ.

This sequence belongs to the insulin family. As to quaternary structure, heterodimer of a B chain and an A chain linked by two disulfide bonds.

It is found in the secreted. Its function is as follows. Insulin decreases blood glucose concentration. It increases cell permeability to monosaccharides, amino acids and fatty acids. It accelerates glycolysis, the pentose phosphate cycle, and glycogen synthesis in liver. The sequence is that of Insulin (INS) from Sus scrofa (Pig).